The primary structure comprises 247 residues: Cytochrome c oxidase subunit 2 (247 aa).

The Mitochondrial intermembrane segment spans residues 12-38 (DVPTPWGLYFQDSSTPNQEGIIELHDN). A helical membrane pass occupies residues 39–59 (IMFYLVLILCTVSWLLFSIVK). Residues 60–78 (DSSKNPLPHKYLVHGQTIE) are Mitochondrial matrix-facing. The chain crosses the membrane as a helical span at residues 79 to 101 (IIWTILPAVVLLIIAFPSFILLY). The Mitochondrial intermembrane portion of the chain corresponds to 102–247 (LCDEVISPAM…KEFLTWLNEQ (146 aa)). Residues His182, Cys217, Glu219, Cys221, His225, and Met228 each contribute to the Cu cation site. Glu219 lines the Mg(2+) pocket.

Belongs to the cytochrome c oxidase subunit 2 family. In terms of assembly, component of the cytochrome c oxidase (complex IV, CIV), a multisubunit enzyme composed of a catalytic core of 3 subunits and several supernumerary subunits. The complex exists as a monomer or a dimer and forms supercomplexes (SCs) in the inner mitochondrial membrane with ubiquinol-cytochrome c oxidoreductase (cytochrome b-c1 complex, complex III, CIII). Cu cation serves as cofactor. The signal sequence of COX2 is processed by IMP1.

Its subcellular location is the mitochondrion inner membrane. The enzyme catalyses 4 Fe(II)-[cytochrome c] + O2 + 8 H(+)(in) = 4 Fe(III)-[cytochrome c] + 2 H2O + 4 H(+)(out). Component of the cytochrome c oxidase, the last enzyme in the mitochondrial electron transport chain which drives oxidative phosphorylation. The respiratory chain contains 3 multisubunit complexes succinate dehydrogenase (complex II, CII), ubiquinol-cytochrome c oxidoreductase (cytochrome b-c1 complex, complex III, CIII) and cytochrome c oxidase (complex IV, CIV), that cooperate to transfer electrons derived from NADH and succinate to molecular oxygen, creating an electrochemical gradient over the inner membrane that drives transmembrane transport and the ATP synthase. Cytochrome c oxidase is the component of the respiratory chain that catalyzes the reduction of oxygen to water. Electrons originating from reduced cytochrome c in the intermembrane space (IMS) are transferred via the dinuclear copper A center (CU(A)) of subunit 2 and heme A of subunit 1 to the active site in subunit 1, a binuclear center (BNC) formed by heme A3 and copper B (CU(B)). The BNC reduces molecular oxygen to 2 water molecules using 4 electrons from cytochrome c in the IMS and 4 protons from the mitochondrial matrix. This chain is Cytochrome c oxidase subunit 2 (COX2), found in Cyberlindnera mrakii (Yeast).